We begin with the raw amino-acid sequence, 277 residues long: MEMO1 family protein TRQ2_0860 (277 aa).

This sequence belongs to the MEMO1 family.

The polypeptide is MEMO1 family protein TRQ2_0860 (Thermotoga sp. (strain RQ2)).